We begin with the raw amino-acid sequence, 92 residues long: UPF0223 protein SMU_1141c (92 aa).

This sequence belongs to the UPF0223 family.

In Streptococcus mutans serotype c (strain ATCC 700610 / UA159), this protein is UPF0223 protein SMU_1141c.